We begin with the raw amino-acid sequence, 124 residues long: Small ribosomal subunit protein uS12c (124 aa).

The tract at residues 104 to 124 (SGGVKDRTQRRSKYGVKKPKS) is disordered. The segment covering 113-124 (RRSKYGVKKPKS) has biased composition (basic residues).

This sequence belongs to the universal ribosomal protein uS12 family. Part of the 30S ribosomal subunit.

The protein localises to the plastid. Its subcellular location is the chloroplast. With S4 and S5 plays an important role in translational accuracy. Located at the interface of the 30S and 50S subunits. The chain is Small ribosomal subunit protein uS12c (rps12) from Thalassiosira pseudonana (Marine diatom).